The following is a 461-amino-acid chain: MEKDKKTWSGRFSEPVAQLVQRYTASIGFDYRLAEYDIQGSLAHARMLAATGIIQPADLAAIEQGLAQIREEISKGEFEWQLEQEDVHLNIERRLTALTGDAGKKLHTARSRNDQVATDIRLYLRTAIDEIIDLIHTLQYVLLDLAEQQAATIMPGFTHLQVAQPVSFGHHLLAYHEMLQRDGQRLQDCRKRVNQLPLGAAALAGTSYPVDRAMVAYELGFDDICHNSLDAVSDRDFAIEFCACAALIMMHLSRLSEELILWMNPAFGFIRLADRFCTGSSIMPQKKNPDVPELVRGKTGRINGHLVALLTLMKSQPLAYNKDNQEDKEPLFDTVDTLKDTLTIYADMLAGLHVNPEAMRQAALRGYATATDLADYLVKKGIPFRDAHEAVAQAVRFAESKACDLSELSLADLRQFSEVIEQDVFEVLTLEGSLQSRNHPGGTAPEQVREAICRARSQLPG.

Belongs to the lyase 1 family. Argininosuccinate lyase subfamily.

The protein resides in the cytoplasm. The enzyme catalyses 2-(N(omega)-L-arginino)succinate = fumarate + L-arginine. The protein operates within amino-acid biosynthesis; L-arginine biosynthesis; L-arginine from L-ornithine and carbamoyl phosphate: step 3/3. This is Argininosuccinate lyase from Nitrosomonas europaea (strain ATCC 19718 / CIP 103999 / KCTC 2705 / NBRC 14298).